The following is a 321-amino-acid chain: Cytochrome c biogenesis protein CcsA (321 aa).

8 consecutive transmembrane segments (helical) span residues 17 to 37, 48 to 68, 71 to 91, 98 to 118, 143 to 163, 225 to 245, 259 to 273, and 286 to 306; these read VVSI…FVGL, TFFC…HLPI, LYES…VPYF, LSTI…WGLL, MVSG…LLVI, ILSI…VWAN, TWAF…IYFH, and AIVA…VNLL.

Belongs to the CcmF/CycK/Ccl1/NrfE/CcsA family. As to quaternary structure, may interact with Ccs1.

It is found in the plastid. The protein localises to the chloroplast thylakoid membrane. Its function is as follows. Required during biogenesis of c-type cytochromes (cytochrome c6 and cytochrome f) at the step of heme attachment. The sequence is that of Cytochrome c biogenesis protein CcsA from Populus alba (White poplar).